The following is a 267-amino-acid chain: Serine/arginine-rich splicing factor 7 (267 aa).

In terms of domain architecture, RRM spans 40–113; it reads TKVYVGNLGT…SRVRVELSTG (74 aa). At Lys53 the chain carries N6-acetyllysine; alternate. Lys53 participates in a covalent cross-link: Glycyl lysine isopeptide (Lys-Gly) (interchain with G-Cter in SUMO2); alternate. Ser61 carries the post-translational modification Phosphoserine. Residues 110 to 127 form a sufficient for interaction with NXF1 region; that stretch reads LSTGMPRRSRFDRPPARR. The CCHC-type zinc-finger motif lies at 133 to 150; that stretch reads DRCYECGEKGHYAYDCHR. A compositionally biased stretch (basic residues) spans 152 to 209; it reads SRRRRSRSRSRSHSRSRGRRYSRSRSRSRGRRSRSASPRRSRSVSLRRSRSASLRRSR. The disordered stretch occupies residues 152 to 267; sequence SRRRRSRSRS…HRSASPERMD (116 aa). 4 tandem repeats follow at residues 182–189, 190–197, 198–205, and 206–213. Residues 182–255 form a 6 X 8 AA repeats of R-R-S-R-S-X-S-X region; that stretch reads RRSRSASPRR…SPKRSRSPSG (74 aa). Phosphoserine is present on residues Ser192, Ser194, and Ser196. A phosphoserine mark is found at Ser210, Ser212, Ser221, Ser223, and Ser225. Over residues 223–251 the composition is skewed to basic residues; that stretch reads SRSRSRSRSISRPRSSRSKSRSPSPKRSR. One copy of the 5; approximate repeat lies at 240 to 247; sequence SKSRSPSP. A 6; approximate repeat occupies 248 to 255; sequence KRSRSPSG. Phosphoserine occurs at positions 260 and 262.

Belongs to the splicing factor SR family. In terms of assembly, found in large molecular weight complexes containing CCNL1 and the p110 isoforms of either CDC2L1 or CDC2L2. Interacts with CCNL2 and CPSF6. Interacts with NXF1. Interacts with YTHDC1. Post-translationally, extensively phosphorylated on serine residues in the RS domain.

The protein localises to the nucleus. It is found in the cytoplasm. Its function is as follows. Required for pre-mRNA splicing. Represses the splicing of MAPT/Tau exon 10. May function as export adapter involved in mRNA nuclear export such as of histone H2A. Binds mRNA which is thought to be transferred to the NXF1-NXT1 heterodimer for export (TAP/NXF1 pathway); enhances NXF1-NXT1 RNA-binding activity. RNA-binding is semi-sequence specific. In Mus musculus (Mouse), this protein is Serine/arginine-rich splicing factor 7 (Srsf7).